We begin with the raw amino-acid sequence, 163 residues long: NADH-quinone oxidoreductase subunit I (163 aa).

2 consecutive 4Fe-4S ferredoxin-type domains span residues 53–83 (LRRY…IEAG) and 94–123 (VRYD…EGPN). Residues Cys63, Cys66, Cys69, Cys73, Cys103, Cys106, Cys109, and Cys113 each coordinate [4Fe-4S] cluster.

It belongs to the complex I 23 kDa subunit family. As to quaternary structure, NDH-1 is composed of 14 different subunits. Subunits NuoA, H, J, K, L, M, N constitute the membrane sector of the complex. Requires [4Fe-4S] cluster as cofactor.

The protein localises to the cell inner membrane. The enzyme catalyses a quinone + NADH + 5 H(+)(in) = a quinol + NAD(+) + 4 H(+)(out). NDH-1 shuttles electrons from NADH, via FMN and iron-sulfur (Fe-S) centers, to quinones in the respiratory chain. The immediate electron acceptor for the enzyme in this species is believed to be ubiquinone. Couples the redox reaction to proton translocation (for every two electrons transferred, four hydrogen ions are translocated across the cytoplasmic membrane), and thus conserves the redox energy in a proton gradient. The sequence is that of NADH-quinone oxidoreductase subunit I from Agrobacterium fabrum (strain C58 / ATCC 33970) (Agrobacterium tumefaciens (strain C58)).